A 288-amino-acid polypeptide reads, in one-letter code: Proteasome subunit beta (288 aa).

Positions 1-57 (MTVDGQVGRWPVSAIPAAYMRPGSGSFTEFLAGAEPHLLPGRAGAQPAGAAPAVPHG) are cleaved as a propeptide — removed in mature form; by autocatalysis. The active-site Nucleophile is Thr-58.

The protein belongs to the peptidase T1B family. The 20S proteasome core is composed of 14 alpha and 14 beta subunits that assemble into four stacked heptameric rings, resulting in a barrel-shaped structure. The two inner rings, each composed of seven catalytic beta subunits, are sandwiched by two outer rings, each composed of seven alpha subunits. The catalytic chamber with the active sites is on the inside of the barrel. Has a gated structure, the ends of the cylinder being occluded by the N-termini of the alpha-subunits. Is capped by the proteasome-associated ATPase, ARC.

It is found in the cytoplasm. It carries out the reaction Cleavage of peptide bonds with very broad specificity.. It participates in protein degradation; proteasomal Pup-dependent pathway. Its activity is regulated as follows. The formation of the proteasomal ATPase ARC-20S proteasome complex, likely via the docking of the C-termini of ARC into the intersubunit pockets in the alpha-rings, may trigger opening of the gate for substrate entry. Interconversion between the open-gate and close-gate conformations leads to a dynamic regulation of the 20S proteasome proteolysis activity. Component of the proteasome core, a large protease complex with broad specificity involved in protein degradation. This Nakamurella multipartita (strain ATCC 700099 / DSM 44233 / CIP 104796 / JCM 9543 / NBRC 105858 / Y-104) (Microsphaera multipartita) protein is Proteasome subunit beta.